The primary structure comprises 352 residues: UDP-N-acetylglucosamine--N-acetylmuramyl-(pentapeptide) pyrophosphoryl-undecaprenol N-acetylglucosamine transferase 2 (352 aa).

UDP-N-acetyl-alpha-D-glucosamine is bound by residues 11-13 (SAG), arginine 164, serine 194, and glutamine 289.

Belongs to the glycosyltransferase 28 family. MurG subfamily.

It localises to the cell membrane. The enzyme catalyses di-trans,octa-cis-undecaprenyl diphospho-N-acetyl-alpha-D-muramoyl-L-alanyl-D-glutamyl-meso-2,6-diaminopimeloyl-D-alanyl-D-alanine + UDP-N-acetyl-alpha-D-glucosamine = di-trans,octa-cis-undecaprenyl diphospho-[N-acetyl-alpha-D-glucosaminyl-(1-&gt;4)]-N-acetyl-alpha-D-muramoyl-L-alanyl-D-glutamyl-meso-2,6-diaminopimeloyl-D-alanyl-D-alanine + UDP + H(+). The protein operates within cell wall biogenesis; peptidoglycan biosynthesis. In terms of biological role, cell wall formation. Catalyzes the transfer of a GlcNAc subunit on undecaprenyl-pyrophosphoryl-MurNAc-pentapeptide (lipid intermediate I) to form undecaprenyl-pyrophosphoryl-MurNAc-(pentapeptide)GlcNAc (lipid intermediate II). This Bacillus anthracis protein is UDP-N-acetylglucosamine--N-acetylmuramyl-(pentapeptide) pyrophosphoryl-undecaprenol N-acetylglucosamine transferase 2.